A 419-amino-acid polypeptide reads, in one-letter code: 1,4-beta-D-glucan cellobiohydrolase CEL6B (419 aa).

An N-terminal signal peptide occupies residues 1-47 (MGESFLLLQPASPALSPTPSSLLLGPTITMRADVLIAALATGALVAA). The substrate site is built by Trp-111 and Ser-113. Residues Asp-152 and Asp-199 each act as proton donor in the active site. Residue Trp-247 coordinates substrate. N-linked (GlcNAc...) asparagine glycosylation is present at Asn-284. Position 287 (Asn-287) interacts with substrate. N-linked (GlcNAc...) asparagine glycosylation occurs at Asn-298. Trp-347 is a substrate binding site. A glycan (N-linked (GlcNAc...) asparagine) is linked at Asn-364. The substrate site is built by Lys-375 and Glu-379.

Belongs to the glycosyl hydrolase 6 (cellulase B) family. Post-translationally, both N- and O-glycosylated.

It localises to the secreted. The catalysed reaction is Hydrolysis of (1-&gt;4)-beta-D-glucosidic linkages in cellulose and cellotetraose, releasing cellobiose from the non-reducing ends of the chains.. Functionally, exoglucanase that plays an important function in biomass degradation by catalyzing the hydrolysis of the non-reducing end beta-1,4-glucosidic linkages in cellulose and cellotetraose to release cellobiose. Hydrolyzes crystalline and amorphous cellulose but is inactive on hydroxyethyl cellulose, mannan, galactomannan, xyloglucan, arabinoxylan, arabinan, xylan, and pectin. This chain is 1,4-beta-D-glucan cellobiohydrolase CEL6B, found in Podospora anserina (strain S / ATCC MYA-4624 / DSM 980 / FGSC 10383) (Pleurage anserina).